We begin with the raw amino-acid sequence, 61 residues long: Small ribosomal subunit protein uS14 (61 aa).

Zn(2+)-binding residues include Cys24, Cys27, Cys40, and Cys43.

Belongs to the universal ribosomal protein uS14 family. Zinc-binding uS14 subfamily. As to quaternary structure, part of the 30S ribosomal subunit. Contacts proteins S3 and S10. Requires Zn(2+) as cofactor.

Its function is as follows. Binds 16S rRNA, required for the assembly of 30S particles and may also be responsible for determining the conformation of the 16S rRNA at the A site. This is Small ribosomal subunit protein uS14 from Geotalea uraniireducens (strain Rf4) (Geobacter uraniireducens).